A 169-amino-acid chain; its full sequence is MLRSEKPVAVEDIVNIYKESPSIIITHYHGLTVSQVSVLREALKSKEAGFKVVKNTLAKIAANQTGLNSIANLFAGPTAIVYSKEPVEMAKLVVNFAKANDNLKIIGGIVDNHVLDEHSIKELSKLLTLNELRGKIIGLLQAPATQVVGVLQAPSSSMARVIQAYASKN.

This sequence belongs to the universal ribosomal protein uL10 family. As to quaternary structure, part of the ribosomal stalk of the 50S ribosomal subunit. The N-terminus interacts with L11 and the large rRNA to form the base of the stalk. The C-terminus forms an elongated spine to which L12 dimers bind in a sequential fashion forming a multimeric L10(L12)X complex.

In terms of biological role, forms part of the ribosomal stalk, playing a central role in the interaction of the ribosome with GTP-bound translation factors. The protein is Large ribosomal subunit protein uL10 of Rickettsia rickettsii (strain Iowa).